A 21-amino-acid chain; its full sequence is NEQSGKSQTVIVGPWGAQVST.

Over residues 1 to 10 (NEQSGKSQTV) the composition is skewed to polar residues. The tract at residues 1 to 21 (NEQSGKSQTVIVGPWGAQVST) is disordered.

This sequence belongs to the jacalin lectin family. In terms of assembly, tetramer of four alpha chains associated with two or four beta chains.

Functionally, D-galactose-specific lectin, binds the T-antigen structure Gal-beta1,3-GalNAc (Thomsen-Friedenreich-antigen-specific lectin). Potent and selective stimulant of distinct T- and B-cell functions. Shows a unique ability to specifically recognize IgA-1 from human serum. This chain is Agglutinin beta-2 chain, found in Artocarpus integer (Jack fruit).